The chain runs to 188 residues: Threonylcarbamoyl-AMP synthase (188 aa).

In terms of domain architecture, YrdC-like spans 3–188 (QLHPSEIKDL…RSGKILRNGQ (186 aa)).

The protein belongs to the SUA5 family. TsaC subfamily.

Its subcellular location is the cytoplasm. It catalyses the reaction L-threonine + hydrogencarbonate + ATP = L-threonylcarbamoyladenylate + diphosphate + H2O. Required for the formation of a threonylcarbamoyl group on adenosine at position 37 (t(6)A37) in tRNAs that read codons beginning with adenine. Catalyzes the conversion of L-threonine, HCO(3)(-)/CO(2) and ATP to give threonylcarbamoyl-AMP (TC-AMP) as the acyladenylate intermediate, with the release of diphosphate. This chain is Threonylcarbamoyl-AMP synthase, found in Shewanella sp. (strain ANA-3).